Consider the following 90-residue polypeptide: MTRRIFCQKLGKEADALNYSPYPGELGERIYNHISEQAWQAWLSHQTMLINEYRLSLIDPKARQFLEQEMINFLFGTGSEKPAGYTSEKE.

The protein belongs to the Fe(2+)-trafficking protein family.

Functionally, could be a mediator in iron transactions between iron acquisition and iron-requiring processes, such as synthesis and/or repair of Fe-S clusters in biosynthetic enzymes. This Coxiella burnetii (strain CbuG_Q212) (Coxiella burnetii (strain Q212)) protein is Probable Fe(2+)-trafficking protein.